The chain runs to 434 residues: UDP-N-acetylglucosamine 1-carboxyvinyltransferase (434 aa).

Lysine 22 to asparagine 23 contributes to the phosphoenolpyruvate binding site. Arginine 97 contacts UDP-N-acetyl-alpha-D-glucosamine. Catalysis depends on aspartate 121, which acts as the Proton donor. UDP-N-acetyl-alpha-D-glucosamine-binding residues include aspartate 319 and methionine 341.

The protein belongs to the EPSP synthase family. MurA subfamily.

It localises to the cytoplasm. The catalysed reaction is phosphoenolpyruvate + UDP-N-acetyl-alpha-D-glucosamine = UDP-N-acetyl-3-O-(1-carboxyvinyl)-alpha-D-glucosamine + phosphate. It functions in the pathway cell wall biogenesis; peptidoglycan biosynthesis. Its function is as follows. Cell wall formation. Adds enolpyruvyl to UDP-N-acetylglucosamine. In Porphyromonas gingivalis (strain ATCC BAA-308 / W83), this protein is UDP-N-acetylglucosamine 1-carboxyvinyltransferase.